A 387-amino-acid polypeptide reads, in one-letter code: Anhydro-N-acetylmuramic acid kinase (387 aa).

17 to 24 is a binding site for ATP; it reads GTSMDGVD.

It belongs to the anhydro-N-acetylmuramic acid kinase family.

The enzyme catalyses 1,6-anhydro-N-acetyl-beta-muramate + ATP + H2O = N-acetyl-D-muramate 6-phosphate + ADP + H(+). The protein operates within amino-sugar metabolism; 1,6-anhydro-N-acetylmuramate degradation. It participates in cell wall biogenesis; peptidoglycan recycling. In terms of biological role, catalyzes the specific phosphorylation of 1,6-anhydro-N-acetylmuramic acid (anhMurNAc) with the simultaneous cleavage of the 1,6-anhydro ring, generating MurNAc-6-P. Is required for the utilization of anhMurNAc either imported from the medium or derived from its own cell wall murein, and thus plays a role in cell wall recycling. This Burkholderia pseudomallei (strain K96243) protein is Anhydro-N-acetylmuramic acid kinase.